The sequence spans 464 residues: MNQTIHRVSPISMSISELTTLLSSGVSVFEIFAGLLVVHLIYQRIRTRVKVYLLDFTCYRAPDSNRVPMSTLIETIYLDDKLDQESIDFQARILERSWLSNQTSIPRSLMEIPLKKSLSSVKIETMTTIFTSVEDLLRKNKLSPRSIDILITNCSLHSPSPSLSAMVINKFHMRSNIKSFNLSGMGCAAGILSVNLANDLLQAHRGSLALIVSTEALNTHWYIGKDRSMLLTNCLFRMGAAAVLMSSNDHDRDNAKYELLHVVRKNKAKDDRAYRCIYQDIDSDEKQGVSITKDVISVAGDMLKMNLTSLGPLVLPYLEQFQYVIQHILCKKLKIYESNSSYTPNFKTAFEHFCIHTGGRAVIQAMEMNLKLTKVDIEPSKMTLHRFGNTSSSSIWYALSYLEAKRRMKKGDRVLQIAFGSGFKCNSAVWRCIRKVEPNTENKWLDFIDSYPVDVPDSTNIRPG.

Residues 21–41 form a helical membrane-spanning segment; it reads LLSSGVSVFEIFAGLLVVHLI. The FAE domain maps to 42-333; the sequence is YQRIRTRVKV…VIQHILCKKL (292 aa). Active-site residues include cysteine 187, histidine 352, histidine 356, histidine 385, and asparagine 389.

It belongs to the thiolase-like superfamily. Chalcone/stilbene synthases family. As to expression, expressed in flowers.

It localises to the membrane. It catalyses the reaction a very-long-chain acyl-CoA + malonyl-CoA + H(+) = a very-long-chain 3-oxoacyl-CoA + CO2 + CoA. It participates in lipid metabolism; fatty acid biosynthesis. This Arabidopsis thaliana (Mouse-ear cress) protein is Probable 3-ketoacyl-CoA synthase 21.